The chain runs to 359 residues: 1-deoxy-D-xylulose 5-phosphate reductoisomerase (359 aa).

NADPH-binding residues include Thr7, Gly8, Ser9, Ile10, Ala31, Asn33, and Asn111. Residue Lys112 coordinates 1-deoxy-D-xylulose 5-phosphate. NADPH is bound at residue Glu113. Asp131 is a binding site for Mn(2+). 1-deoxy-D-xylulose 5-phosphate is bound by residues Ser132, Glu133, Ser155, and His178. Glu133 lines the Mn(2+) pocket. Position 184 (Gly184) interacts with NADPH. Residues Ser191, Asn196, Lys197, and Glu200 each coordinate 1-deoxy-D-xylulose 5-phosphate. Glu200 lines the Mn(2+) pocket.

The protein belongs to the DXR family. The cofactor is Mg(2+). It depends on Mn(2+) as a cofactor.

It carries out the reaction 2-C-methyl-D-erythritol 4-phosphate + NADP(+) = 1-deoxy-D-xylulose 5-phosphate + NADPH + H(+). It functions in the pathway isoprenoid biosynthesis; isopentenyl diphosphate biosynthesis via DXP pathway; isopentenyl diphosphate from 1-deoxy-D-xylulose 5-phosphate: step 1/6. Its function is as follows. Catalyzes the NADPH-dependent rearrangement and reduction of 1-deoxy-D-xylulose-5-phosphate (DXP) to 2-C-methyl-D-erythritol 4-phosphate (MEP). The polypeptide is 1-deoxy-D-xylulose 5-phosphate reductoisomerase (Campylobacter hominis (strain ATCC BAA-381 / DSM 21671 / CCUG 45161 / LMG 19568 / NCTC 13146 / CH001A)).